A 180-amino-acid polypeptide reads, in one-letter code: Hypoxanthine-guanine phosphoribosyltransferase (180 aa).

Residues K43 and G44 each contribute to the diphosphate site. Residues E99 and D100 each contribute to the Mg(2+) site. The active-site Proton acceptor is D103. GMP contacts are provided by residues K131, 152–153 (FI), and D159. R165 is a diphosphate binding site.

The protein belongs to the purine/pyrimidine phosphoribosyltransferase family. Mg(2+) is required as a cofactor.

It is found in the cytoplasm. The enzyme catalyses IMP + diphosphate = hypoxanthine + 5-phospho-alpha-D-ribose 1-diphosphate. It catalyses the reaction GMP + diphosphate = guanine + 5-phospho-alpha-D-ribose 1-diphosphate. The protein operates within purine metabolism; IMP biosynthesis via salvage pathway; IMP from hypoxanthine: step 1/1. It participates in purine metabolism; GMP biosynthesis via salvage pathway; GMP from guanine: step 1/1. In terms of biological role, purine salvage pathway enzyme that catalyzes the transfer of the ribosyl-5-phosphate group from 5-phospho-alpha-D-ribose 1-diphosphate (PRPP) to the N9 position of the 6-oxopurines hypoxanthine and guanine to form the corresponding ribonucleotides IMP (inosine 5'-monophosphate) and GMP (guanosine 5'-monophosphate), with the release of PPi. The sequence is that of Hypoxanthine-guanine phosphoribosyltransferase (hpt) from Streptococcus thermophilus (strain CNRZ 1066).